We begin with the raw amino-acid sequence, 55 residues long: Large ribosomal subunit protein bL33 (55 aa).

This sequence belongs to the bacterial ribosomal protein bL33 family.

The polypeptide is Large ribosomal subunit protein bL33 (rpmG) (Buchnera aphidicola subsp. Acyrthosiphon pisum (strain APS) (Acyrthosiphon pisum symbiotic bacterium)).